The primary structure comprises 139 residues: Putative translationally-controlled tumor protein-like protein TPT1P8 (139 aa).

The 139-residue stretch at 1 to 139 (MIIFQDLISH…KTTSSLLVKT (139 aa)) folds into the TCTP domain. Positions 40–51 (TGNTDDSLIGRN) are enriched in polar residues. The tract at residues 40–60 (TGNTDDSLIGRNSSSESTEDE) is disordered.

This sequence belongs to the TCTP family.

The polypeptide is Putative translationally-controlled tumor protein-like protein TPT1P8 (TPT1P8) (Homo sapiens (Human)).